A 546-amino-acid chain; its full sequence is Alkaline phosphatase PafA (546 aa).

Positions 1–25 (MLTPKKWLLGVLVVSGMLGAQKTNA) are cleaved as a signal peptide. Residues D38 and T79 each contribute to the Zn(2+) site. T79 acts as the Phosphothreonine intermediate in catalysis. Residues N100 and 162-164 (KDR) each bind substrate. Zn(2+) contacts are provided by D305, H309, D352, H353, and H486.

Requires Zn(2+) as cofactor.

It is found in the periplasm. It catalyses the reaction a phosphate monoester + H2O = an alcohol + phosphate. With respect to regulation, strongly inhibited by orthovanadate and EDTA. Also inhibited by inorganic phosphate. Functionally, alkaline phosphatase with broad substrate specificity. Has phosphatase activity towards nucleotide phosphates with a preference for ATP. Active towards a great variety of phosphomonoesters with the exception of 2',3'-cyclic AMP and myo-inositol hexakisphosphate. The protein is Alkaline phosphatase PafA of Elizabethkingia meningoseptica (Chryseobacterium meningosepticum).